Reading from the N-terminus, the 84-residue chain is U1-hexatoxin-Iw1a (84 aa).

Positions 1-18 are cleaved as a signal peptide; it reads MLKFVVVICLVIMAITFA. Cystine bridges form between C21–C32, C26–C40, C31–C66, C50–C74, and C68–C81.

The protein belongs to the MIT-like AcTx family. As to expression, expressed by the venom gland.

Its subcellular location is the secreted. This Illawarra wisharti (Illawarra funnel-web spider) protein is U1-hexatoxin-Iw1a.